The following is a 77-amino-acid chain: Pollen allergen Amb p 5b (77 aa).

Residues 1 to 22 (MNNEKNVSFEFIGSTNEVDEIK) form the signal peptide. Intrachain disulfides connect Cys26-Cys61, Cys33-Cys48, and Cys40-Cys54.

Its subcellular location is the secreted. The protein is Pollen allergen Amb p 5b of Ambrosia psilostachya (Western ragweed).